The primary structure comprises 254 residues: Countin-2 (254 aa).

Residues Met1 to Ala19 form the signal peptide. One can recognise a Saposin B-type domain in the interval Gln22–Gln107. 3 disulfides stabilise this stretch: Cys26–Cys103, Cys29–Cys97, and Cys56–Cys68. Asn110 and Asn219 each carry an N-linked (GlcNAc...) asparagine glycan. Residues Gln231–Tyr254 form a disordered region. Gly residues predominate over residues Thr233 to Ser245.

It belongs to the countin family.

The protein localises to the secreted. Its function is as follows. Cell-counting factor that limits the minimum size of the multicellular structure. May up-regulate the expression of both gp24 and gp80, which mediate cell adhesion. The chain is Countin-2 (ctnB) from Dictyostelium discoideum (Social amoeba).